A 201-amino-acid chain; its full sequence is Small ribosomal subunit protein uS4c (201 aa).

An S4 RNA-binding domain is found at 89-150 (MRLDNIVFRL…RQKSQAIITK (62 aa)).

It belongs to the universal ribosomal protein uS4 family. In terms of assembly, part of the 30S ribosomal subunit. Contacts protein S5. The interaction surface between S4 and S5 is involved in control of translational fidelity.

The protein localises to the plastid. Its subcellular location is the chloroplast. In terms of biological role, one of the primary rRNA binding proteins, it binds directly to 16S rRNA where it nucleates assembly of the body of the 30S subunit. With S5 and S12 plays an important role in translational accuracy. This chain is Small ribosomal subunit protein uS4c (rps4), found in Physcomitrium patens (Spreading-leaved earth moss).